The sequence spans 198 residues: UPF0301 protein Tfu_2389 (198 aa).

It belongs to the UPF0301 (AlgH) family.

The sequence is that of UPF0301 protein Tfu_2389 from Thermobifida fusca (strain YX).